A 113-amino-acid chain; its full sequence is Mitochondrial import inner membrane translocase subunit tim16 (113 aa).

Residues 56–108 (KILGLENVETVSKEDIDKKYNELLTINDPKDGGSEYLQIKISGAKHCLHSALK) form a J-like region.

It belongs to the TIM16/PAM16 family. Probable component of the PAM complex at least composed of a mitochondrial HSP70 protein, grepE, tim16 and tim14. Associates with the TIM23 complex.

Its subcellular location is the mitochondrion inner membrane. Its function is as follows. Regulates ATP-dependent protein translocation into the mitochondrial matrix. The polypeptide is Mitochondrial import inner membrane translocase subunit tim16 (timm16) (Dictyostelium discoideum (Social amoeba)).